A 342-amino-acid polypeptide reads, in one-letter code: N-acetyl-gamma-glutamyl-phosphate reductase (342 aa).

Residue Cys-149 is part of the active site.

It belongs to the NAGSA dehydrogenase family. Type 1 subfamily.

The protein localises to the cytoplasm. It catalyses the reaction N-acetyl-L-glutamate 5-semialdehyde + phosphate + NADP(+) = N-acetyl-L-glutamyl 5-phosphate + NADPH + H(+). The protein operates within amino-acid biosynthesis; L-arginine biosynthesis; N(2)-acetyl-L-ornithine from L-glutamate: step 3/4. Catalyzes the NADPH-dependent reduction of N-acetyl-5-glutamyl phosphate to yield N-acetyl-L-glutamate 5-semialdehyde. In Cereibacter sphaeroides (strain ATCC 17025 / ATH 2.4.3) (Rhodobacter sphaeroides), this protein is N-acetyl-gamma-glutamyl-phosphate reductase.